The sequence spans 606 residues: Diphthine--ammonia ligase (606 aa).

In the N-terminal section; belongs to the Diphthine--ammonia ligase family. It in the C-terminal section; belongs to the RutC family.

It is found in the cytoplasm. It localises to the nucleus. The catalysed reaction is diphthine-[translation elongation factor 2] + NH4(+) + ATP = diphthamide-[translation elongation factor 2] + AMP + diphosphate + H(+). It participates in protein modification; peptidyl-diphthamide biosynthesis. Amidase that catalyzes the last step of diphthamide biosynthesis using ammonium and ATP. Diphthamide biosynthesis consists in the conversion of an L-histidine residue in the translation elongation factor eEF-2 (eft201 or eft202) to diphthamide. Has a role in meiosis. The chain is Diphthine--ammonia ligase (mug71) from Schizosaccharomyces pombe (strain 972 / ATCC 24843) (Fission yeast).